The following is a 397-amino-acid chain: Phosphoglycerate kinase (397 aa).

Residues 21 to 23 (DFN), Arg-37, 60 to 63 (HLGR), Arg-119, and Arg-152 contribute to the substrate site. ATP contacts are provided by residues Lys-203, Gly-294, Glu-325, and 354–357 (GGDS).

This sequence belongs to the phosphoglycerate kinase family. Monomer.

The protein localises to the cytoplasm. It carries out the reaction (2R)-3-phosphoglycerate + ATP = (2R)-3-phospho-glyceroyl phosphate + ADP. Its pathway is carbohydrate degradation; glycolysis; pyruvate from D-glyceraldehyde 3-phosphate: step 2/5. The sequence is that of Phosphoglycerate kinase from Chlorobium phaeobacteroides (strain DSM 266 / SMG 266 / 2430).